A 220-amino-acid polypeptide reads, in one-letter code: Small ribosomal subunit protein uS5 (220 aa).

The disordered stretch occupies residues 1–39 (MAEQPAGQAGTTDNRDARGDREGRRRDSGRGSRERDGEK). Basic and acidic residues predominate over residues 13 to 39 (DNRDARGDREGRRRDSGRGSRERDGEK). The 64-residue stretch at 42 to 105 (YLERVVAINR…EEARKSFFRV (64 aa)) folds into the S5 DRBM domain.

It belongs to the universal ribosomal protein uS5 family. As to quaternary structure, part of the 30S ribosomal subunit. Contacts proteins S4 and S8.

In terms of biological role, with S4 and S12 plays an important role in translational accuracy. Located at the back of the 30S subunit body where it stabilizes the conformation of the head with respect to the body. The polypeptide is Small ribosomal subunit protein uS5 (Mycobacterium bovis (strain ATCC BAA-935 / AF2122/97)).